Here is an 81-residue protein sequence, read N- to C-terminus: Cytochrome b559 subunit alpha (81 aa).

The chain crosses the membrane as a helical span at residues 22–36; it reads VIHSITIPSLFIAGW. Histidine 24 contributes to the heme binding site.

The protein belongs to the PsbE/PsbF family. Heterodimer of an alpha subunit and a beta subunit. PSII is composed of 1 copy each of membrane proteins PsbA, PsbB, PsbC, PsbD, PsbE, PsbF, PsbH, PsbI, PsbJ, PsbK, PsbL, PsbM, PsbT, PsbX, PsbY, PsbZ, Psb30/Ycf12, at least 3 peripheral proteins of the oxygen-evolving complex and a large number of cofactors. It forms dimeric complexes. The cofactor is heme b.

It localises to the plastid. It is found in the chloroplast thylakoid membrane. Functionally, this b-type cytochrome is tightly associated with the reaction center of photosystem II (PSII). PSII is a light-driven water:plastoquinone oxidoreductase that uses light energy to abstract electrons from H(2)O, generating O(2) and a proton gradient subsequently used for ATP formation. It consists of a core antenna complex that captures photons, and an electron transfer chain that converts photonic excitation into a charge separation. The sequence is that of Cytochrome b559 subunit alpha from Cyanidioschyzon merolae (strain NIES-3377 / 10D) (Unicellular red alga).